A 486-amino-acid polypeptide reads, in one-letter code: Malonate-semialdehyde dehydrogenase 1 (486 aa).

NAD(+) contacts are provided by F154, K178, E181, R182, and S231. Catalysis depends on C286, which acts as the Nucleophile. E386 is an NAD(+) binding site.

It belongs to the aldehyde dehydrogenase family. IolA subfamily. As to quaternary structure, homotetramer.

It catalyses the reaction 3-oxopropanoate + NAD(+) + CoA + H2O = hydrogencarbonate + acetyl-CoA + NADH + H(+). The enzyme catalyses 2-methyl-3-oxopropanoate + NAD(+) + CoA + H2O = propanoyl-CoA + hydrogencarbonate + NADH + H(+). Its pathway is polyol metabolism; myo-inositol degradation into acetyl-CoA; acetyl-CoA from myo-inositol: step 7/7. Its function is as follows. Catalyzes the oxidation of malonate semialdehyde (MSA) and methylmalonate semialdehyde (MMSA) into acetyl-CoA and propanoyl-CoA, respectively. Is involved in a myo-inositol catabolic pathway. Bicarbonate, and not CO2, is the end-product of the enzymatic reaction. This Oceanobacillus iheyensis (strain DSM 14371 / CIP 107618 / JCM 11309 / KCTC 3954 / HTE831) protein is Malonate-semialdehyde dehydrogenase 1.